Consider the following 78-residue polypeptide: Acyl carrier protein (78 aa).

The Carrier domain maps to 2–77 (STIEERVKKI…AAIDYIEAAN (76 aa)). S37 is subject to O-(pantetheine 4'-phosphoryl)serine.

This sequence belongs to the acyl carrier protein (ACP) family. Post-translationally, 4'-phosphopantetheine is transferred from CoA to a specific serine of apo-ACP by AcpS. This modification is essential for activity because fatty acids are bound in thioester linkage to the sulfhydryl of the prosthetic group.

The protein resides in the cytoplasm. It functions in the pathway lipid metabolism; fatty acid biosynthesis. Its function is as follows. Carrier of the growing fatty acid chain in fatty acid biosynthesis. This Edwardsiella ictaluri (strain 93-146) protein is Acyl carrier protein.